The sequence spans 264 residues: Glutamate racemase (264 aa).

Substrate is bound by residues 11–12 (DS) and 43–44 (YG). Cys74 acts as the Proton donor/acceptor in catalysis. 75–76 (NT) is a substrate binding site. Cys193 (proton donor/acceptor) is an active-site residue. 194-195 (TH) provides a ligand contact to substrate.

The protein belongs to the aspartate/glutamate racemases family.

It carries out the reaction L-glutamate = D-glutamate. It functions in the pathway cell wall biogenesis; peptidoglycan biosynthesis. Provides the (R)-glutamate required for cell wall biosynthesis. The chain is Glutamate racemase from Bifidobacterium longum subsp. infantis (strain ATCC 15697 / DSM 20088 / JCM 1222 / NCTC 11817 / S12).